The primary structure comprises 179 residues: MEQFHATTIVCVRRGNRVALGGDGQVTLGNIVIKGTARKIRRLYHDKVLAGFAGATADAFTLQERFEAKLEKHQGHLMRAAVELTRDWRTDRVLRRLEAMLIVADAEHTLVLTGNGDVLEPEHGLAAIGSGGAYAQSAALALLRNTELPPETIVKQSLEIAGDLCIYTNQNHVIETLGG.

Residue T7 is part of the active site. Na(+) contacts are provided by G162, C165, and T168.

The protein belongs to the peptidase T1B family. HslV subfamily. A double ring-shaped homohexamer of HslV is capped on each side by a ring-shaped HslU homohexamer. The assembly of the HslU/HslV complex is dependent on binding of ATP.

It localises to the cytoplasm. The catalysed reaction is ATP-dependent cleavage of peptide bonds with broad specificity.. Its activity is regulated as follows. Allosterically activated by HslU binding. Functionally, protease subunit of a proteasome-like degradation complex believed to be a general protein degrading machinery. The chain is ATP-dependent protease subunit HslV from Bordetella avium (strain 197N).